Reading from the N-terminus, the 93-residue chain is Phosphoribosyl-ATP pyrophosphatase (93 aa).

It belongs to the PRA-PH family.

The protein resides in the cytoplasm. It carries out the reaction 1-(5-phospho-beta-D-ribosyl)-ATP + H2O = 1-(5-phospho-beta-D-ribosyl)-5'-AMP + diphosphate + H(+). It participates in amino-acid biosynthesis; L-histidine biosynthesis; L-histidine from 5-phospho-alpha-D-ribose 1-diphosphate: step 2/9. This chain is Phosphoribosyl-ATP pyrophosphatase, found in Mycolicibacterium smegmatis (strain ATCC 700084 / mc(2)155) (Mycobacterium smegmatis).